The sequence spans 312 residues: Olfactory receptor 2C1 (312 aa).

The Extracellular portion of the chain corresponds to 1–24; it reads MEVDSNSSSGSFILMGVSDHPHLE. N6 carries N-linked (GlcNAc...) asparagine glycosylation. The helical transmembrane segment at 25–48 threads the bilayer; that stretch reads IIFFAVILASYLLTLVGNLTIILL. Over 49 to 57 the chain is Cytoplasmic; the sequence is SRLDARLHT. Residues 58-79 traverse the membrane as a helical segment; that stretch reads PMYFFLSNLSSLDLAFTTSSVP. Over 80-100 the chain is Extracellular; the sequence is QMLKNLWGPDKTISYGGCVTQ. Residues C97 and C189 are joined by a disulfide bond. Residues 101-120 traverse the membrane as a helical segment; sequence LYVFLWLGATECILLVVMAF. The Cytoplasmic portion of the chain corresponds to 121–139; it reads DRYVAVCRPLHYMTVMNPR. Residues 140–160 traverse the membrane as a helical segment; that stretch reads LCWGLAAISWLGGLGNSVIQS. Topologically, residues 161-200 are extracellular; that stretch reads TFTLQLPFCGHRKVDNFLCEVPAMIKLACGDTSLNEAVLN. The chain crosses the membrane as a helical span at residues 201 to 222; the sequence is GVCTFFTVVPVSVILVSYCFIA. The Cytoplasmic portion of the chain corresponds to 223-236; that stretch reads QAVMKIRSVEGRRK. The chain crosses the membrane as a helical span at residues 237–261; it reads AFNTCVSHLVVVFLFYGSAIYGYLL. Residues 262–272 are Extracellular-facing; that stretch reads PAKSSNQSQGK. A helical membrane pass occupies residues 273–292; sequence FISLFYSVVTPMVNPLIYTL. Residues 293–312 lie on the Cytoplasmic side of the membrane; it reads RNKEVKGALGRLLGKGRGAS.

It belongs to the G-protein coupled receptor 1 family. Olfactory epithelium. Present in various subcellular compartments of the olfactory sensory neurons, particularly in the axonal processes and neve terminals.

It is found in the cell membrane. In terms of biological role, olfactory receptor that is activated by the binding of organosulfur odorants with thioether groups such as (methylthio)methanetiol (MTMT). Also binds odorants acetophenone and benzaldehyde. The activity of this receptor is mediated by G proteins which activate adenylyl cyclase. May be involved in the molecular processes underlying fasciculation and targeting of olfactory axons. This Mus musculus (Mouse) protein is Olfactory receptor 2C1.